A 263-amino-acid polypeptide reads, in one-letter code: Protein YpjB (263 aa).

A compositionally biased stretch (acidic residues) spans 233-244 (DFDDSSSEDDPV). The tract at residues 233–263 (DFDDSSSEDDPVENSPVVTSPVVSSSKSSFQ) is disordered. The span at 245–263 (ENSPVVTSPVVSSSKSSFQ) shows a compositional bias: low complexity.

The protein is Protein YpjB (ypjB) of Escherichia coli (strain K12).